The chain runs to 154 residues: Lipoprotein signal peptidase (154 aa).

Helical transmembrane passes span 55-75 and 84-104; these read GHMW…IYIM and LFSI…IDRV. Catalysis depends on residues aspartate 111 and aspartate 129. Residues 124-144 form a helical membrane-spanning segment; it reads IFNVADASLSVGVVLMLVYVF.

It belongs to the peptidase A8 family.

It localises to the cell membrane. The enzyme catalyses Release of signal peptides from bacterial membrane prolipoproteins. Hydrolyzes -Xaa-Yaa-Zaa-|-(S,diacylglyceryl)Cys-, in which Xaa is hydrophobic (preferably Leu), and Yaa (Ala or Ser) and Zaa (Gly or Ala) have small, neutral side chains.. The protein operates within protein modification; lipoprotein biosynthesis (signal peptide cleavage). This protein specifically catalyzes the removal of signal peptides from prolipoproteins. In Listeria welshimeri serovar 6b (strain ATCC 35897 / DSM 20650 / CCUG 15529 / CIP 8149 / NCTC 11857 / SLCC 5334 / V8), this protein is Lipoprotein signal peptidase.